Here is an 89-residue protein sequence, read N- to C-terminus: Small ribosomal subunit protein uS15 (89 aa).

The protein belongs to the universal ribosomal protein uS15 family. As to quaternary structure, part of the 30S ribosomal subunit. Forms a bridge to the 50S subunit in the 70S ribosome, contacting the 23S rRNA.

In terms of biological role, one of the primary rRNA binding proteins, it binds directly to 16S rRNA where it helps nucleate assembly of the platform of the 30S subunit by binding and bridging several RNA helices of the 16S rRNA. Its function is as follows. Forms an intersubunit bridge (bridge B4) with the 23S rRNA of the 50S subunit in the ribosome. This chain is Small ribosomal subunit protein uS15, found in Dictyoglomus thermophilum (strain ATCC 35947 / DSM 3960 / H-6-12).